We begin with the raw amino-acid sequence, 600 residues long: MTHSPFPSWPDTAADLIAVATGRMAADMLIRGGKWVNVHTREVLDGYDVAIIRGRIACVVPDATNCTGPDTHMIRANGRYMIPGLCDGHMHIESGMLTPAEFARAVIPHGTTSMFTDPHEIANVLGLEGVRMMHDEALMQPVNIFTQMPSCAPSAPGLETTGFEITAADVADAMAWPGIVGLGEMMNFPGVSNADPKMLAEIAATQRAGKTVGGHYASPDLGPAFAGYIAGGPADDHEGTCEADAIARMRQGMRSMIRLGSAWYDVESQITAITEKGLDPRNMILCTDDCHSGTLVNDGHMNRVVRHAIECGCDPLVALQMATINTATHFGLEREIGSITPGRRADIILTSDLRTLPIETVIARGQVVAEDGHCLVECPHFDWPAAARQTVHMGKTLGPDDFTINAPKGANAVTANVIGVVENQAPTKALKFELPVTEGRVQATGDVAQIALVERHRATGSVTNAFVSGFGYQGRMAMASTVAHDSHHMIVVGTDADDMARAANRLGEVGGGIVLFKDGVELALVELPIAGLMSDRPAAEVAAKADKMMQAMRDCGCTLNNAYMQHSLLALVVIPELRISDLGLVDVRTFEFIPVIESPT.

It belongs to the metallo-dependent hydrolases superfamily. Adenine deaminase family. Mn(2+) is required as a cofactor.

The enzyme catalyses adenine + H2O + H(+) = hypoxanthine + NH4(+). The sequence is that of Adenine deaminase from Roseobacter denitrificans (strain ATCC 33942 / OCh 114) (Erythrobacter sp. (strain OCh 114)).